Consider the following 172-residue polypeptide: Translation initiation factor IF-3 (172 aa).

It belongs to the IF-3 family. Monomer.

Its subcellular location is the cytoplasm. In terms of biological role, IF-3 binds to the 30S ribosomal subunit and shifts the equilibrium between 70S ribosomes and their 50S and 30S subunits in favor of the free subunits, thus enhancing the availability of 30S subunits on which protein synthesis initiation begins. In Sulfurimonas denitrificans (strain ATCC 33889 / DSM 1251) (Thiomicrospira denitrificans (strain ATCC 33889 / DSM 1251)), this protein is Translation initiation factor IF-3.